The chain runs to 418 residues: Gamma-glutamyl phosphate reductase (418 aa).

It belongs to the gamma-glutamyl phosphate reductase family.

It localises to the cytoplasm. The catalysed reaction is L-glutamate 5-semialdehyde + phosphate + NADP(+) = L-glutamyl 5-phosphate + NADPH + H(+). The protein operates within amino-acid biosynthesis; L-proline biosynthesis; L-glutamate 5-semialdehyde from L-glutamate: step 2/2. Catalyzes the NADPH-dependent reduction of L-glutamate 5-phosphate into L-glutamate 5-semialdehyde and phosphate. The product spontaneously undergoes cyclization to form 1-pyrroline-5-carboxylate. This is Gamma-glutamyl phosphate reductase from Photobacterium profundum (strain SS9).